We begin with the raw amino-acid sequence, 875 residues long: Protein translocase subunit SecA (875 aa).

ATP is bound by residues Q87, 105-109, and D512; that span reads GEGKT. The Zn(2+) site is built by C860, C862, C871, and H872.

This sequence belongs to the SecA family. Monomer and homodimer. Part of the essential Sec protein translocation apparatus which comprises SecA, SecYEG and auxiliary proteins SecDF-YajC and YidC. Requires Zn(2+) as cofactor.

Its subcellular location is the cell inner membrane. It localises to the cytoplasm. It catalyses the reaction ATP + H2O + cellular proteinSide 1 = ADP + phosphate + cellular proteinSide 2.. Functionally, part of the Sec protein translocase complex. Interacts with the SecYEG preprotein conducting channel. Has a central role in coupling the hydrolysis of ATP to the transfer of proteins into and across the cell membrane, serving both as a receptor for the preprotein-SecB complex and as an ATP-driven molecular motor driving the stepwise translocation of polypeptide chains across the membrane. This is Protein translocase subunit SecA from Buchnera aphidicola subsp. Acyrthosiphon pisum (strain APS) (Acyrthosiphon pisum symbiotic bacterium).